A 115-amino-acid chain; its full sequence is Ribonuclease P protein component (115 aa).

The protein belongs to the RnpA family. In terms of assembly, consists of a catalytic RNA component (M1 or rnpB) and a protein subunit.

It catalyses the reaction Endonucleolytic cleavage of RNA, removing 5'-extranucleotides from tRNA precursor.. Functionally, RNaseP catalyzes the removal of the 5'-leader sequence from pre-tRNA to produce the mature 5'-terminus. It can also cleave other RNA substrates such as 4.5S RNA. The protein component plays an auxiliary but essential role in vivo by binding to the 5'-leader sequence and broadening the substrate specificity of the ribozyme. This chain is Ribonuclease P protein component, found in Blochmanniella pennsylvanica (strain BPEN).